The following is a 1206-amino-acid chain: Translocase of chloroplast 132, chloroplastic (1206 aa).

Position 2 is an N-acetylglycine (G2). A coiled-coil region spans residues 13-33 (REDKKLAEDRISDEQVVKNEL). 2 disordered regions span residues 33–75 (LVRS…SDDL) and 97–119 (VGDL…VGES). Over residues 39-49 (VRDDNEDEVFE) the composition is skewed to acidic residues. S195 carries the post-translational modification Phosphoserine. The interval 233-499 (QTEQEVEEGE…TTTEADEHDE (267 aa)) is disordered. The span at 309–324 (AYTSNIVTNASGDNEV) shows a compositional bias: polar residues. Positions 325-336 (SSAVTSSPLEES) are enriched in low complexity. Phosphoserine is present on residues S337, S363, and S398. The span at 357–379 (LASSPHSYPESTEVHSNSGSPGV) shows a compositional bias: polar residues. Residues 403–427 (KELEKQQSSRVHVDPEITENSHVET) are compositionally biased toward basic and acidic residues. The span at 430–440 (EVVSSVSPTES) shows a compositional bias: low complexity. The span at 468–492 (APQQSRVNGNGSHNQFQQAEDSTTT) shows a compositional bias: polar residues. The region spanning 572–801 (DFSCTIMVLG…KLQDNIPGRP (230 aa)) is the AIG1-type G domain. A G1 region spans residues 581-588 (GKSGVGKS). GTP is bound by residues 584–589 (GVGKSA) and 603–608 (DAFQMG). S588 is a Mg(2+) binding site. The interval 603 to 606 (DAFQ) is homodimerization. A G2 region spans residues 607 to 611 (MGTKR). Residues 628-631 (DTPG) are G3. The tract at residues 666–671 (RLDMQS) is homodimerization. Residues 700–703 (THAA) form a G4 region. Residues H701 and 749–750 (EN) contribute to the GTP site. The tract at residues 749–751 (ENH) is G5. The segment at 824–862 (QPKLPEQQYGDEEDEDDLEESSDSDEESEYDQLPPFKSL) is disordered. Over residues 832–853 (YGDEEDEDDLEESSDSDEESEY) the composition is skewed to acidic residues. Residues 1182–1199 (LAMVAIVPLFKKLLSYYY) traverse the membrane as a helical segment.

This sequence belongs to the TRAFAC class TrmE-Era-EngA-EngB-Septin-like GTPase superfamily. AIG1/Toc34/Toc159-like paraseptin GTPase family. TOC159 subfamily. In terms of assembly, homodimer. Part of the TOC core complex that includes 1 protein for the specific recognition of transit peptides surrounded by a ring composed of four proteins forming translocation channels, and four to five GTP-binding proteins providing energy. This core complex can interact with components of the TIC complex to form a larger import complex. Chloroplastic protein precursor such as prSS (precursor of the RuBisCO small subunit) interacts with these complexes. The TOC complex contains a specific subset of polar lipids such as digalactosyldiacylglyceride (DGDG), phosphatidylcholine (PC) and phosphatidylglycerol (PG). Mg(2+) is required as a cofactor. In terms of processing, phosphorylated by KOC1. Expressed in seedlings, leaves, flowers, and roots.

The protein localises to the plastid. It localises to the chloroplast outer membrane. The protein resides in the cytoplasm. In terms of biological role, GTPase involved in protein precursor import into chloroplasts. Seems to recognize chloroplast-destined precursor proteins and regulate their presentation to the translocation channel through GTP hydrolysis. Probably specialized in the import of nuclear encoded non-photosynthetic preproteins from the cytoplasm to the chloroplast. The chain is Translocase of chloroplast 132, chloroplastic from Arabidopsis thaliana (Mouse-ear cress).